The chain runs to 71 residues: Small ribosomal subunit protein bS18c (71 aa).

Belongs to the bacterial ribosomal protein bS18 family. Part of the 30S ribosomal subunit.

It localises to the plastid. It is found in the cyanelle. This chain is Small ribosomal subunit protein bS18c (rps18), found in Cyanophora paradoxa.